Consider the following 211-residue polypeptide: Protein GrpE (211 aa).

The disordered stretch occupies residues 1–43 (MTDETTKNGPDATAADAAADAAANVEIDNSVQEEAKQPDPLEL). Over residues 11-23 (DATAADAAADAAA) the composition is skewed to low complexity. Residues 33-43 (EEAKQPDPLEL) show a composition bias toward basic and acidic residues.

It belongs to the GrpE family. In terms of assembly, homodimer.

Its subcellular location is the cytoplasm. In terms of biological role, participates actively in the response to hyperosmotic and heat shock by preventing the aggregation of stress-denatured proteins, in association with DnaK and GrpE. It is the nucleotide exchange factor for DnaK and may function as a thermosensor. Unfolded proteins bind initially to DnaJ; upon interaction with the DnaJ-bound protein, DnaK hydrolyzes its bound ATP, resulting in the formation of a stable complex. GrpE releases ADP from DnaK; ATP binding to DnaK triggers the release of the substrate protein, thus completing the reaction cycle. Several rounds of ATP-dependent interactions between DnaJ, DnaK and GrpE are required for fully efficient folding. This Rhizobium etli (strain ATCC 51251 / DSM 11541 / JCM 21823 / NBRC 15573 / CFN 42) protein is Protein GrpE.